Consider the following 983-residue polypeptide: Inner tegument protein (983 aa).

Residues 474–983 (LNVNTHFAVQ…TSVSLPPASP (510 aa)) form an interaction with large tegument protein region. The disordered stretch occupies residues 902-932 (PWESAPQPPRLRMTPDTDHEESTAGATSVPE). Basic and acidic residues predominate over residues 914–923 (MTPDTDHEES).

The protein belongs to the herpesviridae inner tegument protein family. In terms of assembly, interacts (via C-terminus) with the large tegument protein/LTP (via N-terminus).

It localises to the virion tegument. It is found in the host cytoplasm. The protein localises to the host nucleus. Its subcellular location is the host Golgi apparatus. The protein resides in the host trans-Golgi network. Its function is as follows. Plays an essential role in cytoplasmic secondary envelopment during viral egress. Interacts with the capsid via the large tegument protein/LTP and participates in its transport to the host trans-Golgi network (TGN) where secondary envelopment occurs. Modulates tegumentation and capsid accumulation at the viral assembly complex. The chain is Inner tegument protein (UL47) from Homo sapiens (Human).